Here is a 217-residue protein sequence, read N- to C-terminus: 3-demethoxyubiquinol 3-hydroxylase (217 aa).

Residues Glu66, Glu96, His99, Glu148, Glu180, and His183 each contribute to the Fe cation site.

Belongs to the COQ7 family. Fe cation is required as a cofactor.

The protein resides in the cell membrane. The enzyme catalyses a 5-methoxy-2-methyl-3-(all-trans-polyprenyl)benzene-1,4-diol + AH2 + O2 = a 3-demethylubiquinol + A + H2O. It participates in cofactor biosynthesis; ubiquinone biosynthesis. Its function is as follows. Catalyzes the hydroxylation of 2-nonaprenyl-3-methyl-6-methoxy-1,4-benzoquinol during ubiquinone biosynthesis. This Xanthomonas axonopodis pv. citri (strain 306) protein is 3-demethoxyubiquinol 3-hydroxylase.